The following is a 147-amino-acid chain: Ribosome-binding factor A (147 aa).

The segment at 126 to 147 (LKKNAQPAGDAHPYKDDDAMND) is disordered. The segment covering 137–147 (HPYKDDDAMND) has biased composition (basic and acidic residues).

This sequence belongs to the RbfA family. In terms of assembly, monomer. Binds 30S ribosomal subunits, but not 50S ribosomal subunits or 70S ribosomes.

Its subcellular location is the cytoplasm. One of several proteins that assist in the late maturation steps of the functional core of the 30S ribosomal subunit. Associates with free 30S ribosomal subunits (but not with 30S subunits that are part of 70S ribosomes or polysomes). Required for efficient processing of 16S rRNA. May interact with the 5'-terminal helix region of 16S rRNA. The sequence is that of Ribosome-binding factor A from Corynebacterium diphtheriae (strain ATCC 700971 / NCTC 13129 / Biotype gravis).